Reading from the N-terminus, the 226-residue chain is Ribonuclease 3 (226 aa).

The RNase III domain maps to 6–128 (INRLQRKLGY…LIGGIFLDSD (123 aa)). Residue glutamate 41 coordinates Mg(2+). Aspartate 45 is an active-site residue. The Mg(2+) site is built by aspartate 114 and glutamate 117. Glutamate 117 is an active-site residue. The DRBM domain occupies 155 to 225 (DPKTRLQEFL…AEQALKKLEL (71 aa)).

Belongs to the ribonuclease III family. In terms of assembly, homodimer. Requires Mg(2+) as cofactor.

The protein localises to the cytoplasm. The enzyme catalyses Endonucleolytic cleavage to 5'-phosphomonoester.. Digests double-stranded RNA. Involved in the processing of primary rRNA transcript to yield the immediate precursors to the large and small rRNAs (23S and 16S). Processes some mRNAs, and tRNAs when they are encoded in the rRNA operon. Processes pre-crRNA and tracrRNA of type II CRISPR loci if present in the organism. This chain is Ribonuclease 3, found in Pectobacterium carotovorum subsp. carotovorum (strain PC1).